Consider the following 618-residue polypeptide: DNA mismatch repair protein MutL (618 aa).

Low complexity predominate over residues 367–381 (EPTAAREPATPRYSG). Residues 367–402 (EPTAAREPATPRYSGGASGGNGGRQSAGGWPHAQPG) form a disordered region. Over residues 382-392 (GASGGNGGRQS) the composition is skewed to gly residues.

Belongs to the DNA mismatch repair MutL/HexB family.

Functionally, this protein is involved in the repair of mismatches in DNA. It is required for dam-dependent methyl-directed DNA mismatch repair. May act as a 'molecular matchmaker', a protein that promotes the formation of a stable complex between two or more DNA-binding proteins in an ATP-dependent manner without itself being part of a final effector complex. The polypeptide is DNA mismatch repair protein MutL (Salmonella heidelberg (strain SL476)).